A 75-amino-acid chain; its full sequence is CDC42 small effector protein 2-B (75 aa).

Residues Cys10 and Cys11 are each lipidated (S-palmitoyl cysteine). The CRIB domain maps to 29–42 (IGEPMNFVHTAHVG).

Belongs to the CDC42SE/SPEC family.

It localises to the cytoplasm. Its subcellular location is the cytoskeleton. The protein localises to the cell membrane. Probably involved in the organization of the actin cytoskeleton by acting downstream of CDC42, inducing actin filament assembly. This is CDC42 small effector protein 2-B (cdc42se2-b) from Xenopus laevis (African clawed frog).